The sequence spans 188 residues: Ribosome-recycling factor (188 aa).

It belongs to the RRF family.

Its subcellular location is the cytoplasm. Its function is as follows. Responsible for the release of ribosomes from messenger RNA at the termination of protein biosynthesis. May increase the efficiency of translation by recycling ribosomes from one round of translation to another. This Acidiphilium cryptum (strain JF-5) protein is Ribosome-recycling factor.